Consider the following 268-residue polypeptide: MAVGKNKGLSKGGKKGGKKKVVDPFSRKDWYDVKAPNMFQTRQIGKTLVNRTQGQRIASDYLKGRVFEVSLADLQKDIDPERSFRKFRLIAEDVQDRNVLCNFHGMDLTTDKYRSMVKKWQTLIEAIVEAKTVDGYLLRVFCIGFTAKDQQSQRKTCYAQQSQVRKIRARMTDIITNEVSGADLKQLVNKLALDSIAKDIEKSCQRIYPLHDVYIRKVKVLKKPRFDVSKLLELHGDGGGKTTEAVVSAEGAVVDRPEGYEPPVQEAV.

Residues 1-21 (MAVGKNKGLSKGGKKGGKKKV) are disordered.

It belongs to the eukaryotic ribosomal protein eS1 family. In terms of assembly, component of the small ribosomal subunit. Mature ribosomes consist of a small (40S) and a large (60S) subunit. The 40S subunit contains about 33 different proteins and 1 molecule of RNA (18S). The 60S subunit contains about 49 different proteins and 3 molecules of RNA (28S, 5.8S and 5S).

It is found in the cytoplasm. Functionally, essential for oogenesis; required for late follicle cell development. This Drosophila persimilis (Fruit fly) protein is Small ribosomal subunit protein eS1.